A 444-amino-acid chain; its full sequence is Glutamate--tRNA ligase 1 (444 aa).

The 'HIGH' region signature appears at 8–18 (PSPTGFLHVGN). The 'KMSKS' region motif lies at 239–243 (KISKR). Lysine 242 lines the ATP pocket.

The protein belongs to the class-I aminoacyl-tRNA synthetase family. Glutamate--tRNA ligase type 1 subfamily. In terms of assembly, monomer.

The protein localises to the cytoplasm. It catalyses the reaction tRNA(Glu) + L-glutamate + ATP = L-glutamyl-tRNA(Glu) + AMP + diphosphate. Functionally, catalyzes the attachment of glutamate to tRNA(Glu) in a two-step reaction: glutamate is first activated by ATP to form Glu-AMP and then transferred to the acceptor end of tRNA(Glu). The chain is Glutamate--tRNA ligase 1 from Zymomonas mobilis subsp. mobilis (strain ATCC 31821 / ZM4 / CP4).